A 357-amino-acid chain; its full sequence is N-acetyl-gamma-glutamyl-phosphate reductase (357 aa).

Residue cysteine 160 is part of the active site.

The protein belongs to the NAGSA dehydrogenase family. Type 1 subfamily.

The protein localises to the cytoplasm. The catalysed reaction is N-acetyl-L-glutamate 5-semialdehyde + phosphate + NADP(+) = N-acetyl-L-glutamyl 5-phosphate + NADPH + H(+). It participates in amino-acid biosynthesis; L-arginine biosynthesis; N(2)-acetyl-L-ornithine from L-glutamate: step 3/4. Catalyzes the NADPH-dependent reduction of N-acetyl-5-glutamyl phosphate to yield N-acetyl-L-glutamate 5-semialdehyde. This chain is N-acetyl-gamma-glutamyl-phosphate reductase, found in Parasynechococcus marenigrum (strain WH8102).